Reading from the N-terminus, the 270-residue chain is 3-methyl-2-oxobutanoate hydroxymethyltransferase (270 aa).

Positions 53 and 92 each coordinate Mg(2+). 3-methyl-2-oxobutanoate is bound by residues 53-54 (DS), Asp92, and Lys120. Glu122 contributes to the Mg(2+) binding site. Residue Glu189 is the Proton acceptor of the active site.

This sequence belongs to the PanB family. Homodecamer; pentamer of dimers. Mg(2+) is required as a cofactor.

It localises to the cytoplasm. The enzyme catalyses 3-methyl-2-oxobutanoate + (6R)-5,10-methylene-5,6,7,8-tetrahydrofolate + H2O = 2-dehydropantoate + (6S)-5,6,7,8-tetrahydrofolate. Its pathway is cofactor biosynthesis; (R)-pantothenate biosynthesis; (R)-pantoate from 3-methyl-2-oxobutanoate: step 1/2. Functionally, catalyzes the reversible reaction in which hydroxymethyl group from 5,10-methylenetetrahydrofolate is transferred onto alpha-ketoisovalerate to form ketopantoate. This chain is 3-methyl-2-oxobutanoate hydroxymethyltransferase, found in Saccharophagus degradans (strain 2-40 / ATCC 43961 / DSM 17024).